The following is a 1011-amino-acid chain: Protein translocase subunit SecA (1011 aa).

Residues Q87, 105–109 (GEGKT), and D500 each bind ATP. The interval 969 to 1011 (SLPLGANPAPARPQPAVMQEQECPCGSGKPFNKCHGGEDEATA) is disordered. Residues C991, C993, C1002, and H1003 each contribute to the Zn(2+) site.

This sequence belongs to the SecA family. Monomer and homodimer. Part of the essential Sec protein translocation apparatus which comprises SecA, SecYEG and auxiliary proteins SecDF-YajC and YidC. It depends on Zn(2+) as a cofactor.

The protein localises to the cell inner membrane. It localises to the cytoplasm. The enzyme catalyses ATP + H2O + cellular proteinSide 1 = ADP + phosphate + cellular proteinSide 2.. Part of the Sec protein translocase complex. Interacts with the SecYEG preprotein conducting channel. Has a central role in coupling the hydrolysis of ATP to the transfer of proteins into and across the cell membrane, serving as an ATP-driven molecular motor driving the stepwise translocation of polypeptide chains across the membrane. The polypeptide is Protein translocase subunit SecA (Sorangium cellulosum (strain So ce56) (Polyangium cellulosum (strain So ce56))).